The primary structure comprises 500 residues: Lysine--tRNA ligase (500 aa).

Mg(2+) contacts are provided by E410 and E417.

This sequence belongs to the class-II aminoacyl-tRNA synthetase family. In terms of assembly, homodimer. Requires Mg(2+) as cofactor.

The protein localises to the cytoplasm. The catalysed reaction is tRNA(Lys) + L-lysine + ATP = L-lysyl-tRNA(Lys) + AMP + diphosphate. This Pseudomonas putida (strain ATCC 47054 / DSM 6125 / CFBP 8728 / NCIMB 11950 / KT2440) protein is Lysine--tRNA ligase.